Consider the following 445-residue polypeptide: UDP-glucuronic acid decarboxylase 2 (445 aa).

The residue at position 2 (Ala-2) is an N-acetylalanine. Over Ala-2 to Arg-43 the chain is Cytoplasmic. A helical; Signal-anchor for type II membrane protein membrane pass occupies residues Leu-44–Ser-64. The Lumenal segment spans residues Thr-65–Ala-445. An NAD(+)-binding site is contributed by Asp-149–Asp-174. Arg-258 serves as a coordination point for substrate. The active-site Proton acceptor is the Tyr-261. Residue Tyr-261–Lys-265 coordinates NAD(+). Residue Asn-290 coordinates substrate. Position 302 (Arg-302) interacts with NAD(+). Residues Val-303–Phe-307, Tyr-320–Arg-327, and Asp-387–Arg-391 contribute to the substrate site.

It belongs to the NAD(P)-dependent epimerase/dehydratase family. UDP-glucuronic acid decarboxylase subfamily. As to quaternary structure, homodimer. NAD(+) is required as a cofactor. In terms of tissue distribution, ubiquitous.

The protein resides in the golgi apparatus. The protein localises to the golgi stack membrane. It carries out the reaction UDP-alpha-D-glucuronate + H(+) = UDP-alpha-D-xylose + CO2. It functions in the pathway nucleotide-sugar biosynthesis; UDP-alpha-D-xylose biosynthesis; UDP-alpha-D-xylose from UDP-alpha-D-glucuronate: step 1/1. Functionally, catalyzes the NAD-dependent decarboxylation of UDP-glucuronic acid to UDP-xylose. Necessary for the biosynthesis of the core tetrasaccharide in glycosaminoglycan biosynthesis. The chain is UDP-glucuronic acid decarboxylase 2 (UXS2) from Arabidopsis thaliana (Mouse-ear cress).